The chain runs to 122 residues: uncharacterized protein (122 aa).

Residues 10–120 enclose the HIT domain; that stretch reads VFARILRGEI…AGRRLGPMIT (111 aa). The short motif at 104 to 108 is the Histidine triad motif element; that stretch reads HLHIH.

This is an uncharacterized protein from Azospirillum brasilense.